The chain runs to 146 residues: uncharacterized protein (146 aa).

This is an uncharacterized protein from Arabidopsis thaliana (Mouse-ear cress).